The sequence spans 557 residues: Potassium-transporting ATPase potassium-binding subunit (557 aa).

10 helical membrane passes run 6–26, 59–79, 127–147, 172–192, 247–267, 278–298, 363–383, 410–430, 475–495, and 520–540; these read IQLLIFLFALLIFSPLFGLGL, ALSLLVFNFFGFLLLFLILFF, AGLTTQNFLSATTGLCVLLAL, LYVLLPLSFIFALFLVGFGVV, ISNFLQMFSILILPGACVFLY, WAIFSVMFTILCVGILIVWTF, IVFGGVGAGMYGMILFVLLTV, ILGILLPSTIILLFTAISVSV, VMIAIAMILGRFGVILPVLVI, and FYILLLSVIIIVGALTFFPVL.

It belongs to the KdpA family. As to quaternary structure, the system is composed of three essential subunits: KdpA, KdpB and KdpC.

It localises to the cell inner membrane. Functionally, part of the high-affinity ATP-driven potassium transport (or Kdp) system, which catalyzes the hydrolysis of ATP coupled with the electrogenic transport of potassium into the cytoplasm. This subunit binds the periplasmic potassium ions and delivers the ions to the membrane domain of KdpB through an intramembrane tunnel. The polypeptide is Potassium-transporting ATPase potassium-binding subunit (Leptospira interrogans serogroup Icterohaemorrhagiae serovar copenhageni (strain Fiocruz L1-130)).